Consider the following 142-residue polypeptide: Large ribosomal subunit protein uL13 (142 aa).

Belongs to the universal ribosomal protein uL13 family. In terms of assembly, part of the 50S ribosomal subunit.

In terms of biological role, this protein is one of the early assembly proteins of the 50S ribosomal subunit, although it is not seen to bind rRNA by itself. It is important during the early stages of 50S assembly. The polypeptide is Large ribosomal subunit protein uL13 (Edwardsiella ictaluri (strain 93-146)).